The primary structure comprises 439 residues: Polygalacturonase QRT2 (439 aa).

Positions 1–21 (MYEKIIILSVFLLTFLPSCFS) are cleaved as a signal peptide. Residues 43–69 (RQHQHGHNTRNSHLKNRHGYAPRSSPR) are disordered. Basic residues predominate over residues 44–62 (QHQHGHNTRNSHLKNRHGY). PbH1 repeat units follow at residues 201–250 (CNNL…HVSG) and 251–272 (TQNI…SIVS). The active-site Proton donor is D265. The active site involves H288. PbH1 repeat units follow at residues 304–325 (VSNV…RIKT) and 333–354 (AKNI…IINQ).

Belongs to the glycosyl hydrolase 28 family. As to expression, expressed predominantly in roots with lower expression levels in rosette leaves, flower buds and siliques. Bearly detected in seeds. Found in flowers undergoing floral organ abscission. Also expressed early in anther development, at the time of microspore separation.

Its subcellular location is the secreted. The protein localises to the cell wall. It catalyses the reaction (1,4-alpha-D-galacturonosyl)n+m + H2O = (1,4-alpha-D-galacturonosyl)n + (1,4-alpha-D-galacturonosyl)m.. Its function is as follows. Polygalacturonase required for cell type-specific pectin degradation to separate microspores. Involved in anther dehiscence and floral organ abscission. This chain is Polygalacturonase QRT2 (QRT2), found in Arabidopsis thaliana (Mouse-ear cress).